The primary structure comprises 847 residues: Aryl hydrocarbon receptor (847 aa).

The segment at 1–39 (MNGGGANITYASRKRRKPVQKTVKPIPAEGIKSNPSKRH) is disordered. 2 consecutive short sequence motifs (nuclear localization signal) follow at residues 13 to 16 (RKRR) and 37 to 42 (KRHRDR). The region spanning 27–80 (PAEGIKSNPSKRHRDRLNTELDRLASLLPFPQDVINKLDKLSVLRLSVSYLRAK) is the bHLH domain. The interval 38–66 (RHRDRLNTELDRLASLLPFPQDVINKLDK) is DNA-binding. 3 required for maintaining the overall integrity of the AHR:ARNT heterodimer and its transcriptional activity regions span residues 50 to 82 (LASL…AKSF), 117 to 125 (LLQALNGFV), and 264 to 266 (FAI). Positions 64 to 72 (LDKLSVLRL) match the Nuclear export signal motif. In terms of domain architecture, PAS 1 spans 120–173 (ALNGFVLVVTVDALVFYASSTIQDYLGFQQSDVIHQSVYELIHTEDRAEFQRQL). In terms of domain architecture, PAS 2 spans 281 to 336 (KNFIFRTKHKLDFTPTGCDAKGQIVLGYTEAELCMRGSGYQFIHAADMLYCAESHI). A PAC domain is found at 346–384 (LAVFRLLTKDNRWAWVQSNARFIYKNGRPDFIIATQRPL). Disordered stretches follow at residues 430 to 452 (KSGT…VHPS) and 825 to 847 (HLPP…GRLL). Residues 440–452 (TKPTPSKDSVHPS) are compositionally biased toward polar residues.

Homodimer. Heterodimer; efficient DNA binding requires dimerization with another bHLH protein. Binds MYBBP1A. Interacts with coactivators including SRC-1, RIP140 and NOCA7, and with the corepressor SMRT. Interacts with NEDD8 and IVNS1ABP. Interacts with BMAL1. Interacts with HSP90AB1. Interacts with ARNT; the heterodimer ARNT:AHR binds to core DNA sequence 5'-TGCGTG-3' within the dioxin response element (DRE) of target gene promoters and activates their transcription. Interacts with TIPARP; leading to mono-ADP-ribosylation of AHR and subsequent inhibition of AHR. Post-translationally, mono-ADP-ribosylated, leading to inhibit transcription activator activity of AHR.

It localises to the cytoplasm. The protein localises to the nucleus. In terms of biological role, ligand-activated transcription factor that enables cells to adapt to changing conditions by sensing compounds from the environment, diet, microbiome and cellular metabolism, and which plays important roles in development, immunity and cancer. Upon ligand binding, translocates into the nucleus, where it heterodimerizes with ARNT and induces transcription by binding to xenobiotic response elements (XRE). Regulates a variety of biological processes, including angiogenesis, hematopoiesis, drug and lipid metabolism, cell motility and immune modulation. Xenobiotics can act as ligands: upon xenobiotic-binding, activates the expression of multiple phase I and II xenobiotic chemical metabolizing enzyme genes (such as the CYP1A1 gene). Mediates biochemical and toxic effects of halogenated aromatic hydrocarbons. Next to xenobiotics, natural ligands derived from plants, microbiota, and endogenous metabolism are potent AHR agonists. Tryptophan (Trp) derivatives constitute an important class of endogenous AHR ligands. Acts as a negative regulator of anti-tumor immunity: indoles and kynurenic acid generated by Trp catabolism act as ligand and activate AHR, thereby promoting AHR-driven cancer cell motility and suppressing adaptive immunity. Regulates the circadian clock by inhibiting the basal and circadian expression of the core circadian component PER1. Inhibits PER1 by repressing the CLOCK-BMAL1 heterodimer mediated transcriptional activation of PER1. The heterodimer ARNT:AHR binds to core DNA sequence 5'-TGCGTG-3' within the dioxin response element (DRE) of target gene promoters and activates their transcription. This is Aryl hydrocarbon receptor (AHR) from Oryctolagus cuniculus (Rabbit).